A 360-amino-acid chain; its full sequence is GDP-mannose transporter (360 aa).

Residues 1–49 lie on the Cytoplasmic side of the membrane; that stretch reads MSSSETKGRNEEDVAEIKKAIATGAVKDPSNLSAIPPIFVVSGANFSMN. The chain crosses the membrane as a helical span at residues 50-67; the sequence is FLLLCIQSSVCCACVFAV. Residues 68 to 84 lie on the Lumenal side of the membrane; it reads KKLGIISFRDFDMKDAK. The chain crosses the membrane as a helical span at residues 85–105; it reads MWFPISFLLVSVIYTGSKSLQ. The Cytoplasmic portion of the chain corresponds to 106-110; it reads YLSIP. Residues 111–131 form a helical membrane-spanning segment; it reads VYTIFKNLTIILIAYGEVLWF. Over 132-134 the chain is Lumenal; it reads GGR. The helical transmembrane segment at 135 to 155 threads the bilayer; that stretch reads VTALTFVSFIFMVISSIIAAW. Residues 156–164 are Cytoplasmic-facing; the sequence is SDVQSALAS. A helical transmembrane segment spans residues 165 to 185; it reads SIPGASSGVSVGAMQSLFGAL. Position 186 (Arg-186) is a topological domain, lumenal. Residues 187–207 traverse the membrane as a helical segment; sequence GLNVGYFWMLVNCLTSAAYVL. Residues 208 to 220 lie on the Cytoplasmic side of the membrane; the sequence is SMRKRIKSTGFSD. The helical transmembrane segment at 221 to 241 threads the bilayer; that stretch reads WDTMFYNNLLSIPVLAVFSLI. Over 242–260 the chain is Lumenal; the sequence is AEDWGRENLNRNFPAETRN. A helical transmembrane segment spans residues 261 to 281; that stretch reads FLLFAIAFSGAAAVGISYTTA. The Cytoplasmic segment spans residues 282–291; it reads WCVRVTSSTT. A helical membrane pass occupies residues 292-312; that stretch reads YSMVGALNKLPVAASGMLFFG. Topologically, residues 313-314 are lumenal; it reads DP. A helical membrane pass occupies residues 315–335; it reads VTVGSVSAVGVGFFAGIVYAV. Topologically, residues 336–360 are cytoplasmic; sequence AKNNQKKNERRQAADAIIPMASRKP.

This sequence belongs to the TPT transporter family. SLC35D subfamily. In terms of assembly, homooligomer.

Its subcellular location is the golgi apparatus membrane. The protein localises to the cytoplasmic vesicle membrane. The protein resides in the endoplasmic reticulum membrane. Its function is as follows. Involved in the import of GDP-mannose from the cytoplasm into the Golgi lumen. This is GDP-mannose transporter (VRG4) from Coprinopsis cinerea (strain Okayama-7 / 130 / ATCC MYA-4618 / FGSC 9003) (Inky cap fungus).